The sequence spans 153 residues: NAD(P)H-quinone oxidoreductase subunit N (153 aa).

It belongs to the complex I NdhN subunit family. As to quaternary structure, NDH-1 can be composed of about 15 different subunits; different subcomplexes with different compositions have been identified which probably have different functions.

It localises to the cellular thylakoid membrane. The enzyme catalyses a plastoquinone + NADH + (n+1) H(+)(in) = a plastoquinol + NAD(+) + n H(+)(out). It catalyses the reaction a plastoquinone + NADPH + (n+1) H(+)(in) = a plastoquinol + NADP(+) + n H(+)(out). Functionally, NDH-1 shuttles electrons from an unknown electron donor, via FMN and iron-sulfur (Fe-S) centers, to quinones in the respiratory and/or the photosynthetic chain. The immediate electron acceptor for the enzyme in this species is believed to be plastoquinone. Couples the redox reaction to proton translocation, and thus conserves the redox energy in a proton gradient. Cyanobacterial NDH-1 also plays a role in inorganic carbon-concentration. The chain is NAD(P)H-quinone oxidoreductase subunit N from Prochlorococcus marinus (strain MIT 9211).